Here is a 108-residue protein sequence, read N- to C-terminus: UPF0060 membrane protein SA2130 (108 aa).

Helical transmembrane passes span 5 to 25 (IFIF…IWLW), 31 to 51 (SSLV…IATF), 60 to 80 (VYAA…MVVD), and 86 to 106 (KYDV…LLPS).

The protein belongs to the UPF0060 family.

Its subcellular location is the cell membrane. This chain is UPF0060 membrane protein SA2130, found in Staphylococcus aureus (strain N315).